Here is a 1226-residue protein sequence, read N- to C-terminus: Receptor-type tyrosine-protein phosphatase O (1226 aa).

A signal peptide spans 1 to 29 (MGHLPRGTLGGRRLLPLLGLFVLLKIVTT). A Fibronectin type-III 1 domain is found at 30–115 (FHVAVQDDNN…TKPSRSITVL (86 aa)). The Extracellular portion of the chain corresponds to 30-832 (FHVAVQDDNN…VTEVNPNVVV (803 aa)). Asparagine 75, asparagine 154, and asparagine 227 each carry an N-linked (GlcNAc...) asparagine glycan. The tract at residues 242–305 (EPSGSFPEDS…PNSTDYESTS (64 aa)) is disordered. Over residues 260-270 (IGRDRRFHFPE) the composition is skewed to basic and acidic residues. A compositionally biased stretch (low complexity) spans 277 to 291 (PSNVSSGSPPSNVSS). Asparagine 279 carries an N-linked (GlcNAc...) asparagine glycan. The span at 296–305 (PNSTDYESTS) shows a compositional bias: polar residues. Fibronectin type-III domains are found at residues 339–435 (RTEK…ISPT), 445–541 (KPQH…IVPT), 542–638 (GIKD…TISF), 641–734 (APVA…LEPA), and 735–827 (PPKS…TEVN). Residues asparagine 471 and asparagine 500 are each glycosylated (N-linked (GlcNAc...) asparagine). N-linked (GlcNAc...) asparagine glycans are attached at residues asparagine 710, asparagine 743, and asparagine 800. The helical transmembrane segment at 833 to 853 (ISVLAILSTLLIGLLLVTLVI) threads the bilayer. Residues 854 to 1226 (LRKKHLQMAR…DVIYENVSKS (373 aa)) lie on the Cytoplasmic side of the membrane. Residue serine 875 is modified to Phosphoserine. The region spanning 948–1205 (FSLQFEELKL…IFIHQCVQLM (258 aa)) is the Tyrosine-protein phosphatase domain. Substrate contacts are provided by residues aspartate 1112, 1146 to 1152 (CSAGVGR), and glutamine 1190. The active-site Phosphocysteine intermediate is the cysteine 1146. Phosphotyrosine is present on tyrosine 1220.

This sequence belongs to the protein-tyrosine phosphatase family. Receptor class 3 subfamily. As to quaternary structure, interacts (phosphorylated form) with FYN and GRB2.

The protein resides in the membrane. It catalyses the reaction O-phospho-L-tyrosyl-[protein] + H2O = L-tyrosyl-[protein] + phosphate. Possesses tyrosine phosphatase activity. Plays a role in regulating the glomerular pressure/filtration rate relationship through an effect on podocyte structure and function. The chain is Receptor-type tyrosine-protein phosphatase O (Ptpro) from Mus musculus (Mouse).